Consider the following 156-residue polypeptide: ATP synthase subunit b (156 aa).

The helical transmembrane segment at 5-25 (VTLIGQTVAFIIFVWFCMKFV) threads the bilayer.

It belongs to the ATPase B chain family. In terms of assembly, F-type ATPases have 2 components, F(1) - the catalytic core - and F(0) - the membrane proton channel. F(1) has five subunits: alpha(3), beta(3), gamma(1), delta(1), epsilon(1). F(0) has three main subunits: a(1), b(2) and c(10-14). The alpha and beta chains form an alternating ring which encloses part of the gamma chain. F(1) is attached to F(0) by a central stalk formed by the gamma and epsilon chains, while a peripheral stalk is formed by the delta and b chains.

The protein resides in the cell inner membrane. Functionally, f(1)F(0) ATP synthase produces ATP from ADP in the presence of a proton or sodium gradient. F-type ATPases consist of two structural domains, F(1) containing the extramembraneous catalytic core and F(0) containing the membrane proton channel, linked together by a central stalk and a peripheral stalk. During catalysis, ATP synthesis in the catalytic domain of F(1) is coupled via a rotary mechanism of the central stalk subunits to proton translocation. Its function is as follows. Component of the F(0) channel, it forms part of the peripheral stalk, linking F(1) to F(0). In Shewanella loihica (strain ATCC BAA-1088 / PV-4), this protein is ATP synthase subunit b.